Here is a 149-residue protein sequence, read N- to C-terminus: 5-hydroxytryptamine receptor 1E (149 aa).

At histidine 1–tyrosine 6 the chain is on the extracellular side. A helical transmembrane segment spans residues leucine 7 to valine 31. The Cytoplasmic segment spans residues methionine 32–tyrosine 39. The chain crosses the membrane as a helical span at residues phenylalanine 40–leucine 65. A disulfide bridge links cysteine 42 with cysteine 120. Serotonin contacts are provided by aspartate 49 and cysteine 53. Residues aspartate 66–tyrosine 68 carry the DRY motif; important for ligand-induced conformation changes motif. Residues aspartate 66–arginine 85 are Extracellular-facing. Residues alanine 86 to proline 104 traverse the membrane as a helical segment. Topologically, residues leucine 105–tyrosine 149 are cytoplasmic.

This sequence belongs to the G-protein coupled receptor 1 family.

Its subcellular location is the cell membrane. Its function is as follows. G-protein coupled receptor for 5-hydroxytryptamine (serotonin). Also functions as a receptor for various alkaloids and psychoactive substances. Ligand binding causes a conformation change that triggers signaling via guanine nucleotide-binding proteins (G proteins) and modulates the activity of downstream effectors, such as adenylate cyclase. HTR1E is coupled to G(i)/G(o) G alpha proteins and mediates inhibitory neurotransmission by inhibiting adenylate cyclase activity. This is 5-hydroxytryptamine receptor 1E (HTR1E) from Sus scrofa (Pig).